Here is a 508-residue protein sequence, read N- to C-terminus: MAWLVLLGLLLCMLGAGSGTSDLEGVLPPDPHNCPNKCVCAADVLSCAGRGLQDLPAALPATAAELDLSHNALKRLHPGWLAPLSRLRALYLGYNKLDVLGRGVFTNASGLRILDLSSNLLRRLRTYDLDGLEELEKLLLFNNRLMHLDLDAFQGLSMLSHLYLSCNELSSFSFNHLHGLGLTRLRTLDLSSNWLGHVSVPELAALPTFLKNRLYLHNNPLPCDCSLYHLLRRWHQRGLSALHDFEREYTCLAFKVAESRVRFFEHSRVFKNCSVAAAPGLELPEEELHTHVGQSLRLFCNTTVPAARVAWVSPKNELLVAPGSQDGSIAVLADGSLAIGRVQEQHAGLFVCLASGPRLHHNQTLEYNVSVHKPRPEPEAFNTGFTTLLGCIVGLVLVLLYLFAPPCRGCCRCCRRACRNRCWPRASSPLQELSAQSSVLSTTPPDAPSRKASVHKHVAFLEPGKKGLNGRVQLAVAEDFDLCNPMGLQLKAGSESASSTGSEGLMMS.

The first 19 residues, 1-19, serve as a signal peptide directing secretion; sequence MAWLVLLGLLLCMLGAGSG. Residues 20–383 lie on the Extracellular side of the membrane; the sequence is TSDLEGVLPP…PRPEPEAFNT (364 aa). The region spanning 25 to 61 is the LRRNT domain; it reads GVLPPDPHNCPNKCVCAADVLSCAGRGLQDLPAALPA. 2 disulfides stabilise this stretch: Cys34/Cys40 and Cys38/Cys47. 6 LRR repeats span residues 62-83, 86-107, 110-131, 134-155, 158-178, and 184-207; these read TAAE…WLAP, RLRA…VFTN, GLRI…DLDG, ELEK…AFQG, MLSH…NHLH, and RLRT…AALP. An N-linked (GlcNAc...) asparagine glycan is attached at Asn107. Positions 219–275 constitute an LRRCT domain; the sequence is NPLPCDCSLYHLLRRWHQRGLSALHDFEREYTCLAFKVAESRVRFFEHSRVFKNCSV. Cystine bridges form between Cys223–Cys251, Cys225–Cys273, and Cys300–Cys352. N-linked (GlcNAc...) asparagine glycosylation is found at Asn272, Asn301, Asn362, and Asn368. The 92-residue stretch at 279-370 folds into the Ig-like C2-type domain; that stretch reads PGLELPEEEL…HNQTLEYNVS (92 aa). The chain crosses the membrane as a helical span at residues 384-404; that stretch reads GFTTLLGCIVGLVLVLLYLFA. Residues 405 to 508 lie on the Cytoplasmic side of the membrane; it reads PPCRGCCRCC…STGSEGLMMS (104 aa).

This sequence belongs to the immunoglobulin superfamily. AMIGO family. In terms of assembly, binds AMIGO1 or AMIGO2.

It is found in the membrane. May mediate heterophilic cell-cell interaction. May contribute to signal transduction through its intracellular domain. The chain is Amphoterin-induced protein 3 from Rattus norvegicus (Rat).